Reading from the N-terminus, the 382-residue chain is Galactokinase (382 aa).

34–37 (EHTD) contacts substrate. 124 to 130 (GAGLSSS) is an ATP binding site. Mg(2+)-binding residues include S130 and E162. The active-site Proton acceptor is D174. A substrate-binding site is contributed by Y223.

The protein belongs to the GHMP kinase family. GalK subfamily.

It localises to the cytoplasm. The enzyme catalyses alpha-D-galactose + ATP = alpha-D-galactose 1-phosphate + ADP + H(+). Its pathway is carbohydrate metabolism; galactose metabolism. Functionally, catalyzes the transfer of the gamma-phosphate of ATP to D-galactose to form alpha-D-galactose-1-phosphate (Gal-1-P). The chain is Galactokinase from Shigella boydii serotype 4 (strain Sb227).